The primary structure comprises 121 residues: Large ribosomal subunit protein uL24 (121 aa).

Belongs to the universal ribosomal protein uL24 family. Part of the 50S ribosomal subunit.

In terms of biological role, one of two assembly initiator proteins, it binds directly to the 5'-end of the 23S rRNA, where it nucleates assembly of the 50S subunit. Located at the polypeptide exit tunnel on the outside of the subunit. In Pyrococcus furiosus (strain ATCC 43587 / DSM 3638 / JCM 8422 / Vc1), this protein is Large ribosomal subunit protein uL24.